The chain runs to 429 residues: Serine--tRNA ligase (429 aa).

236-238 (TAE) contacts L-serine. 267–269 (RSE) serves as a coordination point for ATP. Glutamate 290 is a binding site for L-serine. 354–357 (EISS) contributes to the ATP binding site. Serine 390 lines the L-serine pocket.

It belongs to the class-II aminoacyl-tRNA synthetase family. Type-1 seryl-tRNA synthetase subfamily. In terms of assembly, homodimer. The tRNA molecule binds across the dimer.

It is found in the cytoplasm. The catalysed reaction is tRNA(Ser) + L-serine + ATP = L-seryl-tRNA(Ser) + AMP + diphosphate + H(+). It catalyses the reaction tRNA(Sec) + L-serine + ATP = L-seryl-tRNA(Sec) + AMP + diphosphate + H(+). It functions in the pathway aminoacyl-tRNA biosynthesis; selenocysteinyl-tRNA(Sec) biosynthesis; L-seryl-tRNA(Sec) from L-serine and tRNA(Sec): step 1/1. In terms of biological role, catalyzes the attachment of serine to tRNA(Ser). Is also able to aminoacylate tRNA(Sec) with serine, to form the misacylated tRNA L-seryl-tRNA(Sec), which will be further converted into selenocysteinyl-tRNA(Sec). The protein is Serine--tRNA ligase of Photorhabdus laumondii subsp. laumondii (strain DSM 15139 / CIP 105565 / TT01) (Photorhabdus luminescens subsp. laumondii).